We begin with the raw amino-acid sequence, 207 residues long: uncharacterized protein (207 aa).

A helical membrane pass occupies residues 177-197 (LILAIGFIIGILLPTFFILLG).

It is found in the membrane. This is an uncharacterized protein from Haemophilus influenzae (strain ATCC 51907 / DSM 11121 / KW20 / Rd).